A 298-amino-acid chain; its full sequence is Heat stress transcription factor C-2a (298 aa).

Residues 105-128 form a disordered region; the sequence is SSGGGGAKRKEEAGGCGGGGEAAA. Positions 145–181 are hydrophobic repeat HR-A/B; the sequence is LRREQREIEGRVAAMWRRVQETERRPKQMLAFLVKVV. A Nuclear localization signal motif is present at residues 213–216; sequence KRPR.

This sequence belongs to the HSF family. Class C subfamily. As to quaternary structure, homotrimer. In terms of processing, exhibits temperature-dependent phosphorylation.

It localises to the nucleus. In terms of biological role, transcriptional regulator that specifically binds DNA of heat shock promoter elements (HSE). This is Heat stress transcription factor C-2a (HSFC2A) from Oryza sativa subsp. japonica (Rice).